A 267-amino-acid chain; its full sequence is 4-hydroxy-tetrahydrodipicolinate reductase (267 aa).

NAD(+)-binding positions include 8-13 (GAAGRM) and Asp34. Arg35 contributes to the NADP(+) binding site. Residues 98–100 (GTT) and 122–125 (AANF) contribute to the NAD(+) site. His155 acts as the Proton donor/acceptor in catalysis. Residue His156 participates in (S)-2,3,4,5-tetrahydrodipicolinate binding. The Proton donor role is filled by Lys159. Position 165 to 166 (165 to 166 (GT)) interacts with (S)-2,3,4,5-tetrahydrodipicolinate.

This sequence belongs to the DapB family.

The protein resides in the cytoplasm. It carries out the reaction (S)-2,3,4,5-tetrahydrodipicolinate + NAD(+) + H2O = (2S,4S)-4-hydroxy-2,3,4,5-tetrahydrodipicolinate + NADH + H(+). The catalysed reaction is (S)-2,3,4,5-tetrahydrodipicolinate + NADP(+) + H2O = (2S,4S)-4-hydroxy-2,3,4,5-tetrahydrodipicolinate + NADPH + H(+). The protein operates within amino-acid biosynthesis; L-lysine biosynthesis via DAP pathway; (S)-tetrahydrodipicolinate from L-aspartate: step 4/4. Catalyzes the conversion of 4-hydroxy-tetrahydrodipicolinate (HTPA) to tetrahydrodipicolinate. The protein is 4-hydroxy-tetrahydrodipicolinate reductase of Pseudomonas amygdali pv. tabaci (Pseudomonas syringae pv. tabaci).